A 248-amino-acid polypeptide reads, in one-letter code: ATP synthase subunit a, chloroplastic (248 aa).

Transmembrane regions (helical) follow at residues 37-57, 96-116, 135-155, 200-220, and 221-241; these read AQVLITSWVVIAILLGLSIVA, VPFIGTMFLFIFVSNWSGALF, INTTVALALLTSVAYFYAGLH, LVVAVLISLVPLVVPIPMMFL, and GLFTSAIQALIFATLAAAYIG.

This sequence belongs to the ATPase A chain family. In terms of assembly, F-type ATPases have 2 components, CF(1) - the catalytic core - and CF(0) - the membrane proton channel. CF(1) has five subunits: alpha(3), beta(3), gamma(1), delta(1), epsilon(1). CF(0) has four main subunits: a, b, b' and c.

It is found in the plastid. The protein resides in the chloroplast thylakoid membrane. Functionally, key component of the proton channel; it plays a direct role in the translocation of protons across the membrane. The sequence is that of ATP synthase subunit a, chloroplastic from Angiopteris evecta (Mule's foot fern).